A 79-amino-acid polypeptide reads, in one-letter code: Antimicrobial peptide UyCT1 (79 aa).

Residues 1 to 23 (MKTQLAFLAITVILMQLFAQTEA) form the signal peptide. I37 bears the Isoleucine amide mark. A propeptide spanning residues 41–79 (GLRNVDQIADLFDSGLSDADDLFDSGLSDADAKFMKMFM) is cleaved from the precursor.

Belongs to the non-disulfide-bridged peptide (NDBP) superfamily. Short antimicrobial peptide (group 4) family. As to expression, expressed by the venom gland.

Its subcellular location is the secreted. The protein localises to the target cell membrane. Functionally, inhibits the growth of Gram-positive (S.aureus, MIC=15 uM) and Gram-negative bacteria (E.coli, MIC=10 uM and P.aeruginosa, MIC=10 uM). It also shows 26% of hemolysis when 15 uM are tested (81% at 50 uM). Its function is as follows. Inhibits the growth of Gram-negative bacteria (E.coli, MIC=25 uM and P.aeruginosa, MIC=40 uM). It also shows 7% of hemolysis when 50 uM are tested. Does not show activity against the Gram-positive bacteria S.aureus. The chain is Antimicrobial peptide UyCT1 from Urodacus yaschenkoi (Inland robust scorpion).